We begin with the raw amino-acid sequence, 161 residues long: Large ribosomal subunit protein uL29c (161 aa).

The transit peptide at 1–61 directs the protein to the chloroplast; it reads MATMSLAAAS…ERRAAAMVAM (61 aa).

The protein belongs to the universal ribosomal protein uL29 family. In terms of assembly, part of the 50S ribosomal subunit.

It is found in the plastid. Its subcellular location is the chloroplast. The chain is Large ribosomal subunit protein uL29c (RPL29) from Zea mays (Maize).